The following is a 443-amino-acid chain: Xaa-Pro dipeptidase (443 aa).

5 residues coordinate Mn(2+): D246, D257, H339, E384, and E423.

This sequence belongs to the peptidase M24B family. Bacterial-type prolidase subfamily. The cofactor is Mn(2+).

The catalysed reaction is Xaa-L-Pro dipeptide + H2O = an L-alpha-amino acid + L-proline. In terms of biological role, splits dipeptides with a prolyl residue in the C-terminal position. This Shigella dysenteriae serotype 1 (strain Sd197) protein is Xaa-Pro dipeptidase.